The chain runs to 248 residues: Small ribosomal subunit protein uS3 (248 aa).

A KH type-2 domain is found at 39–108 (IRKLVDKKLS…TVAVNVAEIP (70 aa)). Positions 214-248 (ETIARPQRRNDERRPEGGDRANRRRPTARRRAGGE) are disordered. A compositionally biased stretch (basic and acidic residues) spans 221-234 (RRNDERRPEGGDRA). Positions 235 to 248 (NRRRPTARRRAGGE) are enriched in basic residues.

Belongs to the universal ribosomal protein uS3 family. As to quaternary structure, part of the 30S ribosomal subunit. Forms a tight complex with proteins S10 and S14.

In terms of biological role, binds the lower part of the 30S subunit head. Binds mRNA in the 70S ribosome, positioning it for translation. The chain is Small ribosomal subunit protein uS3 from Deinococcus deserti (strain DSM 17065 / CIP 109153 / LMG 22923 / VCD115).